The following is a 282-amino-acid chain: Probable endonuclease 4 (282 aa).

Residues histidine 69, histidine 109, glutamate 144, aspartate 178, histidine 181, histidine 215, aspartate 228, histidine 230, and glutamate 260 each contribute to the Zn(2+) site.

Belongs to the AP endonuclease 2 family. It depends on Zn(2+) as a cofactor.

It catalyses the reaction Endonucleolytic cleavage to 5'-phosphooligonucleotide end-products.. Its function is as follows. Endonuclease IV plays a role in DNA repair. It cleaves phosphodiester bonds at apurinic or apyrimidinic (AP) sites, generating a 3'-hydroxyl group and a 5'-terminal sugar phosphate. This chain is Probable endonuclease 4, found in Thermosipho africanus (strain TCF52B).